The chain runs to 451 residues: tRNA modification GTPase MnmE (451 aa).

3 residues coordinate (6S)-5-formyl-5,6,7,8-tetrahydrofolate: arginine 28, glutamate 85, and lysine 124. One can recognise a TrmE-type G domain in the interval glycine 220–leucine 373. Residue asparagine 230 participates in K(+) binding. Residues asparagine 230–serine 235, threonine 249–threonine 255, and aspartate 274–glycine 277 each bind GTP. Serine 234 contacts Mg(2+). K(+) is bound by residues threonine 249, valine 251, and threonine 254. Threonine 255 provides a ligand contact to Mg(2+). Lysine 451 provides a ligand contact to (6S)-5-formyl-5,6,7,8-tetrahydrofolate.

Belongs to the TRAFAC class TrmE-Era-EngA-EngB-Septin-like GTPase superfamily. TrmE GTPase family. Homodimer. Heterotetramer of two MnmE and two MnmG subunits. Requires K(+) as cofactor.

It localises to the cytoplasm. Exhibits a very high intrinsic GTPase hydrolysis rate. Involved in the addition of a carboxymethylaminomethyl (cmnm) group at the wobble position (U34) of certain tRNAs, forming tRNA-cmnm(5)s(2)U34. The chain is tRNA modification GTPase MnmE from Xylella fastidiosa (strain 9a5c).